Consider the following 368-residue polypeptide: Peptide chain release factor 2 (368 aa).

N5-methylglutamine is present on Gln251.

It belongs to the prokaryotic/mitochondrial release factor family. Post-translationally, methylated by PrmC. Methylation increases the termination efficiency of RF2.

The protein localises to the cytoplasm. In terms of biological role, peptide chain release factor 2 directs the termination of translation in response to the peptide chain termination codons UGA and UAA. This is Peptide chain release factor 2 from Streptomyces avermitilis (strain ATCC 31267 / DSM 46492 / JCM 5070 / NBRC 14893 / NCIMB 12804 / NRRL 8165 / MA-4680).